The following is a 305-amino-acid chain: Ribosomal RNA small subunit methyltransferase H (305 aa).

S-adenosyl-L-methionine is bound by residues 47 to 49 (GGH), Asp66, Phe93, Asp108, and Gln115. Residues 279-305 (ADSNEKLNNPRSRSAKLRLAKKRNPNE) form a disordered region. Basic residues predominate over residues 291–305 (RSAKLRLAKKRNPNE).

The protein belongs to the methyltransferase superfamily. RsmH family.

It localises to the cytoplasm. The enzyme catalyses cytidine(1402) in 16S rRNA + S-adenosyl-L-methionine = N(4)-methylcytidine(1402) in 16S rRNA + S-adenosyl-L-homocysteine + H(+). In terms of biological role, specifically methylates the N4 position of cytidine in position 1402 (C1402) of 16S rRNA. This Prochlorococcus marinus (strain SARG / CCMP1375 / SS120) protein is Ribosomal RNA small subunit methyltransferase H.